Here is a 319-residue protein sequence, read N- to C-terminus: Dehydrogenase/reductase SDR family member 9 (319 aa).

Positions 1 to 17 (MLFWVLGLLILCGFLWT) are cleaved as a signal peptide. Residues 34–58 (ITGC…HVIA) and Asp83 each bind NAD(+). Substrate is bound at residue Ser164. Residue Tyr176 is the Proton acceptor of the active site. Lys180 contacts NAD(+).

It belongs to the short-chain dehydrogenases/reductases (SDR) family. In terms of assembly, homotetramer. Highly expressed in trachea and epidermis. Detected at lower levels in spinal cord, bone marrow, brain, tongue, esophagus, heart, colon, testis, placenta, lung, skeletal muscle and lymph node.

Its subcellular location is the microsome membrane. It localises to the endoplasmic reticulum membrane. The enzyme catalyses 3beta-hydroxy-5alpha-pregnane-20-one + NAD(+) = 5alpha-pregnane-3,20-dione + NADH + H(+). It catalyses the reaction 17beta-hydroxy-5alpha-androstan-3-one + NAD(+) = 5alpha-androstan-3,17-dione + NADH + H(+). The catalysed reaction is androsterone + NAD(+) = 5alpha-androstan-3,17-dione + NADH + H(+). It carries out the reaction 5alpha-androstane-3alpha,17beta-diol + NAD(+) = 17beta-hydroxy-5alpha-androstan-3-one + NADH + H(+). The enzyme catalyses all-trans-retinol + NAD(+) = all-trans-retinal + NADH + H(+). It catalyses the reaction 3alpha-hydroxy-5alpha-pregnan-20-one + NAD(+) = 5alpha-pregnane-3,20-dione + NADH + H(+). Functionally, 3-alpha-hydroxysteroid dehydrogenase that converts 3-alpha-tetrahydroprogesterone (allopregnanolone) to dihydroxyprogesterone and 3-alpha-androstanediol to dihydroxyprogesterone. Also plays a role in the biosynthesis of retinoic acid from retinaldehyde. Can utilize both NADH and NADPH. This Homo sapiens (Human) protein is Dehydrogenase/reductase SDR family member 9 (DHRS9).